Consider the following 584-residue polypeptide: POTE ankyrin domain family member D (584 aa).

ANK repeat units follow at residues 172 to 201 (EKRT…QLNV), 205 to 234 (KKRT…DRNI), 238 to 267 (YGNT…DIES), 271 to 300 (CGLT…NLNV), 304 to 333 (YGRT…DVSS), and 337 to 366 (SGQT…KQML). The interval 369 to 502 (SSENSNPEQD…ILTNKQKQIE (134 aa)) is disordered. Basic and acidic residues-rich tracts occupy residues 377 to 392 (QDLK…RLKV), 401 to 412 (MSQEPEINKDCD), and 466 to 481 (EEYH…KQLS). Residues 482–498 (EEQNTGISQDEILTNKQ) are compositionally biased toward polar residues. The stretch at 494–583 (LTNKQKQIEV…LNEEALTKTN (90 aa)) forms a coiled coil.

The protein belongs to the POTE family. As to expression, expressed in prostate, ovary, testis, placenta and prostate cancer cell lines. Localizes to basal and terminal prostate epithelial cells.

It localises to the cell membrane. The protein is POTE ankyrin domain family member D (POTED) of Homo sapiens (Human).